Reading from the N-terminus, the 305-residue chain is P2Y purinoceptor 14 (305 aa).

At 1–29 the chain is on the extracellular side; sequence MDNTTTTEPPKQPCTRNTLITQQIIPMLY. Asparagine 3 is a glycosylation site (N-linked (GlcNAc...) asparagine). Residues 30-50 form a helical membrane-spanning segment; it reads CVVFITGVLLNGISGWIFFYV. The Cytoplasmic portion of the chain corresponds to 51 to 55; the sequence is PSSKS. The helical transmembrane segment at 56-76 threads the bilayer; sequence FIIYLKNIVVADFLMGLTFPF. The Extracellular portion of the chain corresponds to 77–96; that stretch reads KVLSDSGLGPWQLNVFVFRV. A helical membrane pass occupies residues 97–117; it reads SAVIFYVNMYVSIAFFGLISF. The Cytoplasmic segment spans residues 118–139; the sequence is DRYYKIVKPLLVSIVQSVNYSK. Residues 140-160 traverse the membrane as a helical segment; sequence VLSVLVWVLMLLLAVPNIILT. A glycan (N-linked (GlcNAc...) asparagine) is linked at asparagine 161. Topologically, residues 161–188 are extracellular; it reads NQSVKDVTNIQCMELKNELGRKWHKASN. A helical membrane pass occupies residues 189 to 209; that stretch reads YVFVSIFWIVFLLLTVFYMAI. The Cytoplasmic portion of the chain corresponds to 210-234; it reads TRKIFKSHLKSRKNSISVKRKSSRN. A helical transmembrane segment spans residues 235–255; the sequence is IFSIVLAFVACFAPYHVARIP. Over 256 to 278 the chain is Extracellular; the sequence is YTKSQTEGHYSCQAKETLLYTKE. A helical membrane pass occupies residues 279 to 299; sequence FTLLLSAANVCLDPISISSYA. Topologically, residues 300 to 305 are cytoplasmic; sequence SRLEKS.

Belongs to the G-protein coupled receptor 1 family.

The protein localises to the cell membrane. Receptor for UDP-glucose coupled to G-proteins. This chain is P2Y purinoceptor 14 (P2ry14), found in Rattus norvegicus (Rat).